A 380-amino-acid polypeptide reads, in one-letter code: Cytochrome b (380 aa).

4 helical membrane passes run 34–54 (FGSL…LLAM), 78–99 (WLIR…YLHI), 114–134 (WNTG…GYVL), and 179–199 (FFAL…IHLT). Residues His-84 and His-98 each coordinate heme b. Heme b-binding residues include His-183 and His-197. Position 202 (His-202) interacts with a ubiquinone. 4 consecutive transmembrane segments (helical) span residues 227-247 (TKDT…ALFS), 289-309 (LGGV…PLLH), 321-341 (LSQL…WIGS), and 348-368 (FIII…ILFP).

It belongs to the cytochrome b family. In terms of assembly, the cytochrome bc1 complex contains 11 subunits: 3 respiratory subunits (MT-CYB, CYC1 and UQCRFS1), 2 core proteins (UQCRC1 and UQCRC2) and 6 low-molecular weight proteins (UQCRH/QCR6, UQCRB/QCR7, UQCRQ/QCR8, UQCR10/QCR9, UQCR11/QCR10 and a cleavage product of UQCRFS1). This cytochrome bc1 complex then forms a dimer. Requires heme b as cofactor.

It localises to the mitochondrion inner membrane. Functionally, component of the ubiquinol-cytochrome c reductase complex (complex III or cytochrome b-c1 complex) that is part of the mitochondrial respiratory chain. The b-c1 complex mediates electron transfer from ubiquinol to cytochrome c. Contributes to the generation of a proton gradient across the mitochondrial membrane that is then used for ATP synthesis. This is Cytochrome b (MT-CYB) from Aptenodytes patagonicus (King penguin).